Here is a 435-residue protein sequence, read N- to C-terminus: Elongation factor 1-alpha (435 aa).

In terms of domain architecture, tr-type G spans 4–229 (KPHLNLIVIG…DQLEIPPKPV (226 aa)). The G1 stretch occupies residues 13-20 (GHVDHGKS). Residue 13 to 20 (GHVDHGKS) participates in GTP binding. Ser-20 contacts Mg(2+). The G2 stretch occupies residues 69–73 (GVTIN). The interval 90–93 (DAPG) is G3. GTP is bound by residues 90–94 (DAPGH) and 152–155 (NKMD). The G4 stretch occupies residues 152-155 (NKMD). The segment at 193–195 (VAP) is G5.

The protein belongs to the TRAFAC class translation factor GTPase superfamily. Classic translation factor GTPase family. EF-Tu/EF-1A subfamily.

The protein localises to the cytoplasm. It carries out the reaction GTP + H2O = GDP + phosphate + H(+). In terms of biological role, GTP hydrolase that promotes the GTP-dependent binding of aminoacyl-tRNA to the A-site of ribosomes during protein biosynthesis. The polypeptide is Elongation factor 1-alpha (Sulfolobus acidocaldarius (strain ATCC 33909 / DSM 639 / JCM 8929 / NBRC 15157 / NCIMB 11770)).